The sequence spans 75 residues: UPF0729 protein C18orf32 homolog (75 aa).

A necessary for its localzation to the endoplasmic reticulum and lipid droplets region spans residues 1–37 (MVCIPCIVIPVLLWVYKRFLEPVLYPIISPIISRFWR). Residues 43 to 65 (DTPQQKTSTAECNGAANGSTANG) show a composition bias toward polar residues. Positions 43–75 (DTPQQKTSTAECNGAANGSTANGPKTVADKKAD) are disordered.

It belongs to the UPF0729 family.

The protein resides in the endoplasmic reticulum. It localises to the lipid droplet. This Danio rerio (Zebrafish) protein is UPF0729 protein C18orf32 homolog.